Here is a 308-residue protein sequence, read N- to C-terminus: Ribonuclease HIII (308 aa).

In terms of domain architecture, RNase H type-2 spans 91-308; it reads KNVIGSDEVG…TEKALKMVKK (218 aa). Residues Asp97, Glu98, and Asp202 each contribute to the a divalent metal cation site.

Belongs to the RNase HII family. RnhC subfamily. The cofactor is Mn(2+). It depends on Mg(2+) as a cofactor.

It localises to the cytoplasm. The enzyme catalyses Endonucleolytic cleavage to 5'-phosphomonoester.. Its function is as follows. Endonuclease that specifically degrades the RNA of RNA-DNA hybrids. In Listeria monocytogenes serovar 1/2a (strain ATCC BAA-679 / EGD-e), this protein is Ribonuclease HIII.